We begin with the raw amino-acid sequence, 323 residues long: Ferrochelatase (323 aa).

Residues His196 and Glu277 each contribute to the Fe cation site.

Belongs to the ferrochelatase family.

The protein localises to the cytoplasm. It carries out the reaction heme b + 2 H(+) = protoporphyrin IX + Fe(2+). Its pathway is porphyrin-containing compound metabolism; protoheme biosynthesis; protoheme from protoporphyrin-IX: step 1/1. Functionally, catalyzes the ferrous insertion into protoporphyrin IX. In Haemophilus influenzae (strain PittEE), this protein is Ferrochelatase.